The following is a 408-amino-acid chain: MDKKKAPGQTVASSNWLQLQSTLSTITKEKDVSNSKAHNSRSSQSPSSSLRSSSRIQRKSKHSQGVGQYMGRVEVASTAKTTVSQLRKGKVISNEPCILLEAFSDSPLLHELRHMVLGNHLLSESQKEPGQYLAIDCEMVGVGPNGMENTLARVSIVNYHGAVILDTFVQPREPVTDYRTWISGVKQSDLLGAPQFDEVNKQVANLLHDKILIGHAIDNDLKVLMLTHPGPLTRDTQKYKPLQEIAKNKRPGLKKLSELLLGVQIQTGAHSSVVDARVAMALYRLHKKEWERSVWRQTEAYRSISSVNKPEHVLGKRGHDEKEAEDGEETAGESKRKNRKKSGNGGGRQQFPGGGRKGISSGLDVIVRRNGQRVDENGRGDGTSRRKAGRGEISTFTGGESWWEQPAA.

Residues 27 to 70 (TKEKDVSNSKAHNSRSSQSPSSSLRSSSRIQRKSKHSQGVGQYM) form a disordered region. Over residues 40–55 (SRSSQSPSSSLRSSSR) the composition is skewed to low complexity. The region spanning 131 to 292 (QYLAIDCEMV…YRLHKKEWER (162 aa)) is the Exonuclease domain. Over residues 310–322 (PEHVLGKRGHDEK) the composition is skewed to basic and acidic residues. The interval 310–408 (PEHVLGKRGH…GESWWEQPAA (99 aa)) is disordered. Positions 343-357 (GNGGGRQQFPGGGRK) are enriched in gly residues. The span at 372–384 (QRVDENGRGDGTS) shows a compositional bias: basic and acidic residues.

This sequence belongs to the REXO4 family.

The protein localises to the nucleus. Its function is as follows. Exoribonuclease involved in ribosome biosynthesis. Involved in the processing of ITS1, the internal transcribed spacer localized between the 18S and 5.8S rRNAs. The chain is RNA exonuclease 4 (REX4) from Cryptococcus neoformans var. neoformans serotype D (strain B-3501A) (Filobasidiella neoformans).